Consider the following 109-residue polypeptide: Class I hydrophobin dewE (109 aa).

Residues 1–20 (MKVATALSVLAVAGSALASA) form the signal peptide. 4 disulfide bridges follow: Cys34/Cys87, Cys40/Cys81, Cys41/Cys74, and Cys88/Cys102.

The protein belongs to the fungal hydrophobin family. Self-assembles to form functional amyloid fibrils called rodlets. Self-assembly into fibrillar rodlets occurs spontaneously at hydrophobic:hydrophilic interfaces and the rodlets further associate laterally to form amphipathic monolayers.

The protein resides in the secreted. It is found in the spore wall. Aerial growth, conidiation, and dispersal of filamentous fungi in the environment rely upon a capability of their secreting small amphipathic proteins called hydrophobins (HPBs) with low sequence identity. Class I can self-assemble into an outermost layer of rodlet bundles on aerial cell surfaces, conferring cellular hydrophobicity that supports fungal growth, development and dispersal; whereas Class II form highly ordered films at water-air interfaces through intermolecular interactions but contribute nothing to the rodlet structure. DewE is a class I hydrophobin that contributes to the hydrophobicity of the spore surface. This Emericella nidulans (strain FGSC A4 / ATCC 38163 / CBS 112.46 / NRRL 194 / M139) (Aspergillus nidulans) protein is Class I hydrophobin dewE.